Consider the following 190-residue polypeptide: Peptidyl-tRNA hydrolase (190 aa).

Position 18 (tyrosine 18) interacts with tRNA. Residue histidine 23 is the Proton acceptor of the active site. TRNA is bound by residues phenylalanine 65, asparagine 67, and asparagine 113.

This sequence belongs to the PTH family. As to quaternary structure, monomer.

The protein resides in the cytoplasm. The catalysed reaction is an N-acyl-L-alpha-aminoacyl-tRNA + H2O = an N-acyl-L-amino acid + a tRNA + H(+). Hydrolyzes ribosome-free peptidyl-tRNAs (with 1 or more amino acids incorporated), which drop off the ribosome during protein synthesis, or as a result of ribosome stalling. Its function is as follows. Catalyzes the release of premature peptidyl moieties from peptidyl-tRNA molecules trapped in stalled 50S ribosomal subunits, and thus maintains levels of free tRNAs and 50S ribosomes. This chain is Peptidyl-tRNA hydrolase, found in Akkermansia muciniphila (strain ATCC BAA-835 / DSM 22959 / JCM 33894 / BCRC 81048 / CCUG 64013 / CIP 107961 / Muc).